A 459-amino-acid polypeptide reads, in one-letter code: Flavin-containing monooxygenase FMO GS-OX5 (459 aa).

An FAD-binding site is contributed by 17–22; sequence GAGAAG. 212 to 217 is an NADP(+) binding site; the sequence is GNFASG.

Belongs to the FMO family.

It carries out the reaction a (Z)-omega-(methylsulfanyl)-N-sulfo-alkylhydroximate S-glucoside + NADPH + O2 + H(+) = a (Z)-omega-(methylsulfinyl)-alkyl-glucosinolate + NADP(+) + H2O. Catalyzes the conversion of methylthioalkyl glucosinolates into methylsulfinylalkyl glucosinolates. Specific for 8-methylthiooctyl (8-MTO) glucosinolates. This Arabidopsis thaliana (Mouse-ear cress) protein is Flavin-containing monooxygenase FMO GS-OX5 (FMOGS-OX5).